The following is a 370-amino-acid chain: N-acetyltaurine hydrolase (370 aa).

The a divalent metal cation site is built by histidine 26, histidine 28, glutamate 189, histidine 221, histidine 250, and aspartate 318.

Belongs to the metallo-dependent hydrolases superfamily. Phosphotriesterase family. A divalent metal cation is required as a cofactor.

Its subcellular location is the cytoplasm. The protein localises to the cytosol. It carries out the reaction N-acetyltaurine + H2O = taurine + acetate. N-acetyltaurine hydrolase catalyzes the hydrolysis of N-acetyltaurine into taurine and acetate. In Dictyostelium discoideum (Social amoeba), this protein is N-acetyltaurine hydrolase (pter).